A 386-amino-acid chain; its full sequence is ATP phosphoribosyltransferase regulatory subunit (386 aa).

It belongs to the class-II aminoacyl-tRNA synthetase family. HisZ subfamily. As to quaternary structure, heteromultimer composed of HisG and HisZ subunits.

It localises to the cytoplasm. It participates in amino-acid biosynthesis; L-histidine biosynthesis; L-histidine from 5-phospho-alpha-D-ribose 1-diphosphate: step 1/9. Functionally, required for the first step of histidine biosynthesis. May allow the feedback regulation of ATP phosphoribosyltransferase activity by histidine. The protein is ATP phosphoribosyltransferase regulatory subunit of Variovorax paradoxus (strain S110).